Reading from the N-terminus, the 260-residue chain is Adenosylcobinamide-GDP ribazoletransferase (260 aa).

Helical transmembrane passes span 40-60 (AFPF…LLLL), 64-84 (TDPL…TGAL), 117-137 (YGAI…AAII), 142-162 (PLAA…AIAW), 188-208 (HFAL…PFGL), and 210-230 (PLVA…VFIR).

Belongs to the CobS family. Requires Mg(2+) as cofactor.

It is found in the cell inner membrane. It carries out the reaction alpha-ribazole + adenosylcob(III)inamide-GDP = adenosylcob(III)alamin + GMP + H(+). The enzyme catalyses alpha-ribazole 5'-phosphate + adenosylcob(III)inamide-GDP = adenosylcob(III)alamin 5'-phosphate + GMP + H(+). It functions in the pathway cofactor biosynthesis; adenosylcobalamin biosynthesis; adenosylcobalamin from cob(II)yrinate a,c-diamide: step 7/7. Its function is as follows. Joins adenosylcobinamide-GDP and alpha-ribazole to generate adenosylcobalamin (Ado-cobalamin). Also synthesizes adenosylcobalamin 5'-phosphate from adenosylcobinamide-GDP and alpha-ribazole 5'-phosphate. This chain is Adenosylcobinamide-GDP ribazoletransferase, found in Rhizobium etli (strain ATCC 51251 / DSM 11541 / JCM 21823 / NBRC 15573 / CFN 42).